Reading from the N-terminus, the 268-residue chain is Universal stress protein MT3220 (268 aa).

ATP contacts are provided by residues glycine 13, 107–113 (GSVGLDH), arginine 117, and 120–121 (SV).

It belongs to the universal stress protein A family.

The chain is Universal stress protein MT3220 from Mycobacterium tuberculosis (strain CDC 1551 / Oshkosh).